Reading from the N-terminus, the 86-residue chain is UPF0297 protein BBR47_19030 (86 aa).

Belongs to the UPF0297 family.

This chain is UPF0297 protein BBR47_19030, found in Brevibacillus brevis (strain 47 / JCM 6285 / NBRC 100599).